Here is a 484-residue protein sequence, read N- to C-terminus: Neuronal acetylcholine receptor subunit alpha-9 (484 aa).

The signal sequence occupies residues 1-27; sequence MKRNNLSSFYVSLWLLFTATMLQAVES. The Extracellular segment spans residues 28–240; sequence AKGKYAQMLF…FTLILKRKSS (213 aa). N-linked (GlcNAc...) asparagine glycosylation occurs at N59. A disulfide bridge links C157 with C171. An N-linked (GlcNAc...) asparagine glycan is attached at N172. 2 residues coordinate Na(+): S193 and D195. Residues C221 and C222 are joined by a disulfide bond. The next 3 helical transmembrane spans lie at 241–261, 271–291, and 305–325; these read FYIF…PLGF, VSLG…VAEI, and YIAT…IMNV. Topologically, residues 326–462 are cytoplasmic; the sequence is HHCGSEAKPV…WKKVAKVMDR (137 aa). Residues 364 to 395 are disordered; the sequence is RREKEQEHRLEGGDMCRGGDGKSHLSSRNDDS. A helical membrane pass occupies residues 463–483; sequence FFMWIFFIMVFFMSVLIIGKA.

It belongs to the ligand-gated ion channel (TC 1.A.9) family. Acetylcholine receptor (TC 1.A.9.1) subfamily. Alpha-9/CHRNA9 sub-subfamily. As to quaternary structure, forms homo- or heteropentameric channels in conjunction with CHRNA10. The native outer hair cell receptor is composed of CHRNA9:CHRNA10 heterooligomers. Found in the stoichiometric form (CHRNA9)2:(CHRNA10)3. In terms of tissue distribution, expressed in hair cells of the cochlea (at protein level). Expressed in hair cells of the cochlea.

The protein resides in the synaptic cell membrane. Its subcellular location is the cell membrane. The catalysed reaction is Ca(2+)(in) = Ca(2+)(out). The enzyme catalyses K(+)(in) = K(+)(out). It catalyses the reaction Na(+)(in) = Na(+)(out). It carries out the reaction Mg(2+)(in) = Mg(2+)(out). With respect to regulation, activated by a myriad of ligands such as acetylcholine. AChR activity is inhibited by the antagonist alpha-conotoxins RgIA and GeXXA, small disulfide-constrained peptides from cone snails. Its function is as follows. Component of neuronal acetylcholine receptors (nAChRs) that function as pentameric, ligand-gated cation channels with high calcium permeability among other activities. nAChRs are excitatory neurotrasnmitter receptors formed by a collection of nAChR subunits known to mediate synaptic transmission in the nervous system and the neuromuscular junction. Each nAchR subunit confers differential attributes to channel properties, including activation, deactivation and desensitization kinetics, pH sensitivity, cation permeability, and binding to allosteric modulators. Forms either homopentamers or heteropentamers with CHRNA10. Expressed in the inner ear, in sympathetic neurons and in other non-neuronal cells, such as skin keratinocytes and lymphocytes. The channel is permeable to a range of divalent cations including calcium, the influx of which may activate a potassium current which hyperpolarizes the cell membrane. The chain is Neuronal acetylcholine receptor subunit alpha-9 (CHRNA9) from Gallus gallus (Chicken).